Here is a 1396-residue protein sequence, read N- to C-terminus: DNA ligase 6 (1396 aa).

Disordered regions lie at residues 441 to 464 (KNAC…DTTP) and 562 to 599 (MNLT…GPGQ). Short sequence motifs (nuclear localization signal) lie at residues 572-579 (GKRGKSSG) and 886-893 (LRKISVQT). Glu1037 is a binding site for ATP. Residue Lys1039 is the N6-AMP-lysine intermediate of the active site. ATP contacts are provided by Arg1044, Arg1060, Glu1092, and Phe1136. Glu1092 lines the Mg(2+) pocket. A Mg(2+)-binding site is contributed by Glu1207. 3 residues coordinate ATP: Lys1212, Arg1225, and Lys1231.

Belongs to the ATP-dependent DNA ligase family. Mg(2+) is required as a cofactor. Mostly expressed in buds and flowers, and, to a lower extent, in stems, leaves, siliques and seeds.

It localises to the nucleus. It carries out the reaction ATP + (deoxyribonucleotide)n-3'-hydroxyl + 5'-phospho-(deoxyribonucleotide)m = (deoxyribonucleotide)n+m + AMP + diphosphate.. In terms of biological role, DNA ligase that seals nicks in double-stranded DNA during DNA replication, DNA recombination and DNA repair. Required to maintain seed viability (e.g. longevity and storability) and during seed germination, probably by repairing DNA damage accumulated during seed development, storage and/or imbibition. Facilitates seed germination in cold conditions (2 degrees Celsius) and under oxidative stress (e.g. menadione, a genotoxic agent). Involved in repair of X-ray-induced damage. Functionally, limits stable root transformation by A.tumefaciens T-DNA. This chain is DNA ligase 6, found in Arabidopsis thaliana (Mouse-ear cress).